Here is a 136-residue protein sequence, read N- to C-terminus: Large ribosomal subunit protein uL16 (136 aa).

The protein belongs to the universal ribosomal protein uL16 family. In terms of assembly, part of the 50S ribosomal subunit.

Its function is as follows. Binds 23S rRNA and is also seen to make contacts with the A and possibly P site tRNAs. This Vesicomyosocius okutanii subsp. Calyptogena okutanii (strain HA) protein is Large ribosomal subunit protein uL16.